The following is a 179-amino-acid chain: Large ribosomal subunit protein uL5 (179 aa).

This sequence belongs to the universal ribosomal protein uL5 family. Part of the 50S ribosomal subunit; part of the 5S rRNA/L5/L18/L25 subcomplex. Contacts the 5S rRNA and the P site tRNA. Forms a bridge to the 30S subunit in the 70S ribosome.

In terms of biological role, this is one of the proteins that bind and probably mediate the attachment of the 5S RNA into the large ribosomal subunit, where it forms part of the central protuberance. In the 70S ribosome it contacts protein S13 of the 30S subunit (bridge B1b), connecting the 2 subunits; this bridge is implicated in subunit movement. Contacts the P site tRNA; the 5S rRNA and some of its associated proteins might help stabilize positioning of ribosome-bound tRNAs. This chain is Large ribosomal subunit protein uL5, found in Desulforapulum autotrophicum (strain ATCC 43914 / DSM 3382 / VKM B-1955 / HRM2) (Desulfobacterium autotrophicum).